Reading from the N-terminus, the 707-residue chain is Probable potassium transporter 17 (707 aa).

The interval 1–25 is disordered; it reads MDLEAGSIRPRSDGEGGGPAAGRET. Residues 1 to 34 are Cytoplasmic-facing; that stretch reads MDLEAGSIRPRSDGEGGGPAAGRETDDSNVWKDL. Residues 35–55 form a helical membrane-spanning segment; it reads FLAYKTLGVVFGGLVTSPLYV. At 56–71 the chain is on the extracellular side; it reads YPSMNLSSPTEADYLG. Asn-60 carries an N-linked (GlcNAc...) asparagine glycan. The chain crosses the membrane as a helical span at residues 72-92; sequence IYSIMFWTLTLIGVVKYVCIA. The Cytoplasmic portion of the chain corresponds to 93–157; the sequence is LNADDHGEGG…FFEQSITARR (65 aa). The chain crosses the membrane as a helical span at residues 158–178; it reads VLLFVAVLGMCMLIGDGILTP. Over 179 to 194 the chain is Extracellular; sequence AISVLSAIDGIRGPFP. Residues 195–215 traverse the membrane as a helical segment; the sequence is TVSKPVVEALSAAILIGLFLL. Topologically, residues 216–222 are cytoplasmic; that stretch reads QKYGTSK. The helical transmembrane segment at 223-243 threads the bilayer; it reads VSFLFSPIMAAWTFTTPIIGL. Over 244–276 the chain is Extracellular; it reads YSIVHYYPGIFKAISPYYIVHFFLRNKRQGWQL. A helical membrane pass occupies residues 277-297; that stretch reads LGGTVLCITGAEAMFADLGHF. Residues 298-305 lie on the Cytoplasmic side of the membrane; that stretch reads SKKAIQIA. Residues 306–326 traverse the membrane as a helical segment; it reads FLSSIYPSLVLTYAGQTAYLI. At 327–343 the chain is on the extracellular side; that stretch reads NNVNDFGDGFYKFVPRP. A helical transmembrane segment spans residues 344–364; that stretch reads VYWPMFVVATLAAIVASQSLI. Residues 365–402 are Cytoplasmic-facing; the sequence is SATFSVIKQSVVLDYFPRVKVVHTSQHKEGEVYSPEIN. Residues 403–423 form a helical membrane-spanning segment; the sequence is YILMVLCVGVILGFGGGKAIG. The Extracellular segment spans residues 424-427; sequence NAFG. Residues 428–448 form a helical membrane-spanning segment; that stretch reads VVVIMVMLITTVLLTLVMIII. The Cytoplasmic segment spans residues 449–454; sequence WRTPLV. A helical transmembrane segment spans residues 455–475; the sequence is LAGLYFVPFFIMEGAYVSAVF. At 476 to 480 the chain is on the extracellular side; the sequence is TKIPE. Residues 481-501 traverse the membrane as a helical segment; that stretch reads GGWLPFAVSITLAMIMFGWYY. At 502-707 the chain is on the cytoplasmic side; the sequence is GRQRKFEYEM…RVEIGMLYKV (206 aa).

Belongs to the HAK/KUP transporter (TC 2.A.72.3) family.

The protein resides in the membrane. High-affinity potassium transporter. The polypeptide is Probable potassium transporter 17 (HAK17) (Oryza sativa subsp. japonica (Rice)).